A 272-amino-acid polypeptide reads, in one-letter code: Enoyl-[acyl-carrier-protein] reductase [NADH] 1 (272 aa).

Residues glycine 17, 23-24 (SI), glutamine 44, 68-69 (DV), and isoleucine 96 each bind NAD(+). Active-site proton acceptor residues include tyrosine 149 and tyrosine 159. NAD(+)-binding positions include lysine 166 and 195 to 199 (IKTLA).

Belongs to the short-chain dehydrogenases/reductases (SDR) family. FabI subfamily.

It localises to the cell inner membrane. It catalyses the reaction a 2,3-saturated acyl-[ACP] + NAD(+) = a (2E)-enoyl-[ACP] + NADH + H(+). It functions in the pathway lipid metabolism; fatty acid biosynthesis. The sequence is that of Enoyl-[acyl-carrier-protein] reductase [NADH] 1 (fabI1) from Rhizobium meliloti (strain 1021) (Ensifer meliloti).